The following is a 364-amino-acid chain: Aminomethyltransferase (364 aa).

The protein belongs to the GcvT family. The glycine cleavage system is composed of four proteins: P, T, L and H.

It catalyses the reaction N(6)-[(R)-S(8)-aminomethyldihydrolipoyl]-L-lysyl-[protein] + (6S)-5,6,7,8-tetrahydrofolate = N(6)-[(R)-dihydrolipoyl]-L-lysyl-[protein] + (6R)-5,10-methylene-5,6,7,8-tetrahydrofolate + NH4(+). Functionally, the glycine cleavage system catalyzes the degradation of glycine. The protein is Aminomethyltransferase of Salmonella enteritidis PT4 (strain P125109).